The following is a 97-amino-acid chain: uncharacterized protein (97 aa).

This is an uncharacterized protein from Escherichia coli O6:K15:H31 (strain 536 / UPEC).